A 37-amino-acid polypeptide reads, in one-letter code: Large ribosomal subunit protein bL36 (37 aa).

It belongs to the bacterial ribosomal protein bL36 family.

This Acidithiobacillus ferrooxidans (strain ATCC 23270 / DSM 14882 / CIP 104768 / NCIMB 8455) (Ferrobacillus ferrooxidans (strain ATCC 23270)) protein is Large ribosomal subunit protein bL36.